The sequence spans 269 residues: Phosphate import ATP-binding protein PstB (269 aa).

The ABC transporter domain maps to 21-264 (IEIKDFNFFY…PKDRRTENYI (244 aa)). ATP is bound at residue 55 to 62 (GPSGCGKT).

Belongs to the ABC transporter superfamily. Phosphate importer (TC 3.A.1.7) family. As to quaternary structure, the complex is composed of two ATP-binding proteins (PstB), two transmembrane proteins (PstC and PstA) and a solute-binding protein (PstS).

Its subcellular location is the cell membrane. The enzyme catalyses phosphate(out) + ATP + H2O = ADP + 2 phosphate(in) + H(+). In terms of biological role, part of the ABC transporter complex PstSACB involved in phosphate import. Responsible for energy coupling to the transport system. This chain is Phosphate import ATP-binding protein PstB, found in Mycoplasma capricolum subsp. capricolum (strain California kid / ATCC 27343 / NCTC 10154).